Consider the following 342-residue polypeptide: uncharacterized protein (342 aa).

Cys-41, His-63, Cys-94, Cys-97, Cys-100, Cys-108, and Glu-149 together coordinate Zn(2+).

It belongs to the zinc-containing alcohol dehydrogenase family. Requires Zn(2+) as cofactor.

This is an uncharacterized protein from Haemophilus influenzae (strain ATCC 51907 / DSM 11121 / KW20 / Rd).